Consider the following 194-residue polypeptide: Peptidyl-tRNA hydrolase (194 aa).

Tyr-17 is a tRNA binding site. The active-site Proton acceptor is His-22. Residues Tyr-68, Asn-70, and Asn-116 each coordinate tRNA.

It belongs to the PTH family. As to quaternary structure, monomer.

The protein resides in the cytoplasm. It catalyses the reaction an N-acyl-L-alpha-aminoacyl-tRNA + H2O = an N-acyl-L-amino acid + a tRNA + H(+). In terms of biological role, hydrolyzes ribosome-free peptidyl-tRNAs (with 1 or more amino acids incorporated), which drop off the ribosome during protein synthesis, or as a result of ribosome stalling. Functionally, catalyzes the release of premature peptidyl moieties from peptidyl-tRNA molecules trapped in stalled 50S ribosomal subunits, and thus maintains levels of free tRNAs and 50S ribosomes. The chain is Peptidyl-tRNA hydrolase from Pseudomonas paraeruginosa (strain DSM 24068 / PA7) (Pseudomonas aeruginosa (strain PA7)).